Reading from the N-terminus, the 288-residue chain is Orotidine 5'-phosphate decarboxylase (288 aa).

Lys-97 acts as the Proton donor in catalysis.

This sequence belongs to the OMP decarboxylase family. Type 2 subfamily.

The enzyme catalyses orotidine 5'-phosphate + H(+) = UMP + CO2. It functions in the pathway pyrimidine metabolism; UMP biosynthesis via de novo pathway; UMP from orotate: step 2/2. In Clostridium tetani (strain Massachusetts / E88), this protein is Orotidine 5'-phosphate decarboxylase.